Consider the following 62-residue polypeptide: Small ribosomal subunit protein eS27 (62 aa).

The Zn(2+) site is built by cysteine 17, cysteine 20, cysteine 36, and cysteine 39. The C4-type zinc-finger motif lies at 17 to 39 (CPDCENEQIIFEKASTVVDCVVC).

This sequence belongs to the eukaryotic ribosomal protein eS27 family. As to quaternary structure, part of the 30S ribosomal subunit. Zn(2+) serves as cofactor.

In Methanosphaerula palustris (strain ATCC BAA-1556 / DSM 19958 / E1-9c), this protein is Small ribosomal subunit protein eS27.